The primary structure comprises 601 residues: Glutathione-regulated potassium-efflux system protein KefB (601 aa).

13 helical membrane passes run 4–24 (SDFLLAGVLFLFAAVAAVPLA), 29–49 (IGAVLGYLLAGIAIGPWGLGF), 55–75 (EILHFSELGVVFLMFIIGLEL), 87–107 (IFGVGAAQVLLSAALLAGLLM), 115–135 (AAVVGGIGLAMSSTAMALQLM), 152–172 (VLLFQDLAVIPALALVPLLAG), 177–197 (HFDWMKVGMKVLAFVGMLIGG), 207–227 (FIAASGVREVFTAATLLLVLG), 230–250 (LFMDALGLSMALGTFIAGVLL), 268–288 (GLLLGLFFISVGMSLNLGVLY), 291–311 (LLWVVISVVVLVAVKILVLYL), 324–344 (MQFAGVLSQGGEFAFVLFSTA), and 356–376 (ALLLVTVTLSMMTTPLLMKLV). The region spanning 400–519 (KPQVIVVGFG…AGVTQFSRET (120 aa)) is the RCK N-terminal domain.

Belongs to the monovalent cation:proton antiporter 2 (CPA2) transporter (TC 2.A.37) family. KefB subfamily. In terms of assembly, interacts with the regulatory subunit KefG.

Its subcellular location is the cell inner membrane. Its activity is regulated as follows. Activated by adducts between glutathione and electrophiles. Its function is as follows. Pore-forming subunit of a potassium efflux system that confers protection against electrophiles. Catalyzes K(+)/H(+) antiport. The chain is Glutathione-regulated potassium-efflux system protein KefB from Escherichia coli (strain K12).